Consider the following 287-residue polypeptide: Protease HtpX (287 aa).

The next 2 helical transmembrane spans lie at 4–24 (IFLL…VMSI) and 33–53 (GGLL…SLAI). His-139 provides a ligand contact to Zn(2+). Residue Glu-140 is part of the active site. His-143 serves as a coordination point for Zn(2+). 2 helical membrane-spanning segments follow: residues 154–174 (LIQG…AGII) and 195–215 (AVVF…VAYF). Glu-220 is a Zn(2+) binding site.

It belongs to the peptidase M48B family. It depends on Zn(2+) as a cofactor.

The protein localises to the cell inner membrane. This chain is Protease HtpX, found in Shewanella frigidimarina (strain NCIMB 400).